The sequence spans 220 residues: NADH-quinone oxidoreductase subunit I (220 aa).

2 4Fe-4S ferredoxin-type domains span residues Leu71 to His102 and Asp112 to Arg141. Cys82, Cys85, Cys88, Cys92, Cys121, Cys124, Cys127, and Cys131 together coordinate [4Fe-4S] cluster. The disordered stretch occupies residues Met187–Val220. Positions Pro198–Thr207 are enriched in basic and acidic residues.

Belongs to the complex I 23 kDa subunit family. In terms of assembly, NDH-1 is composed of 14 different subunits. Subunits NuoA, H, J, K, L, M, N constitute the membrane sector of the complex. The cofactor is [4Fe-4S] cluster.

Its subcellular location is the cell inner membrane. It carries out the reaction a quinone + NADH + 5 H(+)(in) = a quinol + NAD(+) + 4 H(+)(out). In terms of biological role, NDH-1 shuttles electrons from NADH, via FMN and iron-sulfur (Fe-S) centers, to quinones in the respiratory chain. The immediate electron acceptor for the enzyme in this species is believed to be ubiquinone. Couples the redox reaction to proton translocation (for every two electrons transferred, four hydrogen ions are translocated across the cytoplasmic membrane), and thus conserves the redox energy in a proton gradient. The polypeptide is NADH-quinone oxidoreductase subunit I (Helicobacter pylori (strain Shi470)).